A 221-amino-acid polypeptide reads, in one-letter code: Histidine biosynthesis bifunctional protein HisIE (221 aa).

The segment at 1–129 (MAYSKNFSIE…AKKTSPFSNI (129 aa)) is phosphoribosyl-AMP cyclohydrolase. The segment at 130 to 221 (CSELFDTLHE…VLESRRGKNN (92 aa)) is phosphoribosyl-ATP pyrophosphohydrolase.

The protein in the N-terminal section; belongs to the PRA-CH family. This sequence in the C-terminal section; belongs to the PRA-PH family.

It localises to the cytoplasm. The enzyme catalyses 1-(5-phospho-beta-D-ribosyl)-ATP + H2O = 1-(5-phospho-beta-D-ribosyl)-5'-AMP + diphosphate + H(+). It catalyses the reaction 1-(5-phospho-beta-D-ribosyl)-5'-AMP + H2O = 1-(5-phospho-beta-D-ribosyl)-5-[(5-phospho-beta-D-ribosylamino)methylideneamino]imidazole-4-carboxamide. The protein operates within amino-acid biosynthesis; L-histidine biosynthesis; L-histidine from 5-phospho-alpha-D-ribose 1-diphosphate: step 2/9. Its pathway is amino-acid biosynthesis; L-histidine biosynthesis; L-histidine from 5-phospho-alpha-D-ribose 1-diphosphate: step 3/9. This chain is Histidine biosynthesis bifunctional protein HisIE, found in Prochlorococcus marinus subsp. pastoris (strain CCMP1986 / NIES-2087 / MED4).